An 86-amino-acid polypeptide reads, in one-letter code: UPF0437 protein Ava_4254 (86 aa).

It belongs to the UPF0437 family.

The chain is UPF0437 protein Ava_4254 from Trichormus variabilis (strain ATCC 29413 / PCC 7937) (Anabaena variabilis).